The sequence spans 353 residues: uncharacterized protein (353 aa).

This is an uncharacterized protein from Caenorhabditis elegans.